The primary structure comprises 168 residues: Photosystem I assembly protein Ycf3 (168 aa).

TPR repeat units follow at residues A35 to P68, S72 to L105, and G120 to N153.

This sequence belongs to the Ycf3 family.

It is found in the plastid. Its subcellular location is the chloroplast thylakoid membrane. Functionally, essential for the assembly of the photosystem I (PSI) complex. May act as a chaperone-like factor to guide the assembly of the PSI subunits. The sequence is that of Photosystem I assembly protein Ycf3 from Populus alba (White poplar).